Consider the following 384-residue polypeptide: S-adenosylmethionine synthase (384 aa).

An ATP-binding site is contributed by H15. D17 lines the Mg(2+) pocket. Residue E43 coordinates K(+). Positions 56 and 99 each coordinate L-methionine. Positions 99 to 109 are flexible loop; the sequence is QSPDINQGVDR. Residues 164–166, 230–231, D239, 245–246, A262, and K266 contribute to the ATP site; these read DAK, RF, and RK. D239 serves as a coordination point for L-methionine. K270 contacts L-methionine.

It belongs to the AdoMet synthase family. In terms of assembly, homotetramer; dimer of dimers. The cofactor is Mg(2+). Requires K(+) as cofactor.

It localises to the cytoplasm. It carries out the reaction L-methionine + ATP + H2O = S-adenosyl-L-methionine + phosphate + diphosphate. It functions in the pathway amino-acid biosynthesis; S-adenosyl-L-methionine biosynthesis; S-adenosyl-L-methionine from L-methionine: step 1/1. Functionally, catalyzes the formation of S-adenosylmethionine (AdoMet) from methionine and ATP. The overall synthetic reaction is composed of two sequential steps, AdoMet formation and the subsequent tripolyphosphate hydrolysis which occurs prior to release of AdoMet from the enzyme. The polypeptide is S-adenosylmethionine synthase (Cronobacter sakazakii (strain ATCC BAA-894) (Enterobacter sakazakii)).